A 602-amino-acid polypeptide reads, in one-letter code: Probable translation initiation factor IF-2 (602 aa).

Positions 18 to 233 (LRTPIVCVMG…LVGLAQRFLK (216 aa)) constitute a tr-type G domain. The G1 stretch occupies residues 27–34 (GHVDHGKT). 27 to 34 (GHVDHGKT) is a binding site for GTP. The segment at 52-56 (AITQH) is G2. The interval 88–91 (DTPG) is G3. Residues 88-92 (DTPGH) and 142-145 (NKID) contribute to the GTP site. The segment at 142–145 (NKID) is G4. The G5 stretch occupies residues 210–212 (SAI).

Belongs to the TRAFAC class translation factor GTPase superfamily. Classic translation factor GTPase family. IF-2 subfamily.

Its function is as follows. Function in general translation initiation by promoting the binding of the formylmethionine-tRNA to ribosomes. Seems to function along with eIF-2. This is Probable translation initiation factor IF-2 from Methanothrix thermoacetophila (strain DSM 6194 / JCM 14653 / NBRC 101360 / PT) (Methanosaeta thermophila).